Here is a 70-residue protein sequence, read N- to C-terminus: Putative membrane protein insertion efficiency factor (70 aa).

This sequence belongs to the UPF0161 family.

The protein localises to the cell membrane. Functionally, could be involved in insertion of integral membrane proteins into the membrane. The chain is Putative membrane protein insertion efficiency factor from Symbiobacterium thermophilum (strain DSM 24528 / JCM 14929 / IAM 14863 / T).